The sequence spans 98 residues: uncharacterized protein (98 aa).

This is an uncharacterized protein from Human cytomegalovirus (strain AD169) (HHV-5).